The chain runs to 729 residues: MDEPLFSCVLPCAKGSEQVLQQEAEQLGVQTLSIAPAVVRGKASLLTFYRLCLWSRTASRVLLVLAHENVDSAEAIYEVARNIAWEDHIAPDDTFAVRFNGLGCGIRNTQFGALKIKDAVVDRLRDIVKRRPDVDAKTPDILLDAHLHKNELTLALDLSGGSLHERGYRQAHGAAPMKETLAATLLYRARWHEFCAQPATLIDPTCGAGTLVLEAAMMAADYAPNLQRQHWGFTRWQNHRPALWNKVIDEAQTRKNAGIAALSDYVFYGYDQNPVVIAAARANAKRLGLEDFVHFAPKRLEDLTADFGARGFVVANPPYGERLGEVQELIPTYAALGHWFKTLPADWEMAVIASNDALLKRMRLRAHKYYQAFNGTIAAQIVHYRRSEQPESQETAAQQKLAQASVGISEQAQMFANRLQKNIQKIRPSAERAQTDAYRIYDQDMPEYAVAIDCYGDAVVIQEYAPPKTIDPQKAQQRLFDVLQVVPEVLALDERSVFLKTRQRQTGKTQYNPAAEKRNEERIVYEGAARFLVNLSDYLDTGLFLDHRPMRRLLFEQAAGKRVLNLFCYTATASVQAALGGASYTTSVDLSPTYLDWAQRNFDLNALSDRHRLQRADVMAWLHSGKSQFDMIFCDPPTFSNTKKEQRVFDVQRDQIALIDGCMQRLAAGGILYFSNNYRGFRLEEALCARYCVQEISENTIDFDFKRRPKIHRVWKIMHRSDGEQSAEK.

Positions 47 to 158 (TFYRLCLWSR…KNELTLALDL (112 aa)) constitute a THUMP domain.

This sequence belongs to the methyltransferase superfamily. RlmKL family.

It localises to the cytoplasm. It catalyses the reaction guanosine(2445) in 23S rRNA + S-adenosyl-L-methionine = N(2)-methylguanosine(2445) in 23S rRNA + S-adenosyl-L-homocysteine + H(+). It carries out the reaction guanosine(2069) in 23S rRNA + S-adenosyl-L-methionine = N(2)-methylguanosine(2069) in 23S rRNA + S-adenosyl-L-homocysteine + H(+). Specifically methylates the guanine in position 2445 (m2G2445) and the guanine in position 2069 (m7G2069) of 23S rRNA. The protein is Ribosomal RNA large subunit methyltransferase K/L of Dichelobacter nodosus (strain VCS1703A).